A 261-amino-acid polypeptide reads, in one-letter code: Acyl-[acyl-carrier-protein]--UDP-N-acetylglucosamine O-acyltransferase (261 aa).

This sequence belongs to the transferase hexapeptide repeat family. LpxA subfamily. In terms of assembly, homotrimer.

The protein localises to the cytoplasm. The enzyme catalyses a (3R)-hydroxyacyl-[ACP] + UDP-N-acetyl-alpha-D-glucosamine = a UDP-3-O-[(3R)-3-hydroxyacyl]-N-acetyl-alpha-D-glucosamine + holo-[ACP]. It functions in the pathway glycolipid biosynthesis; lipid IV(A) biosynthesis; lipid IV(A) from (3R)-3-hydroxytetradecanoyl-[acyl-carrier-protein] and UDP-N-acetyl-alpha-D-glucosamine: step 1/6. In terms of biological role, involved in the biosynthesis of lipid A, a phosphorylated glycolipid that anchors the lipopolysaccharide to the outer membrane of the cell. The chain is Acyl-[acyl-carrier-protein]--UDP-N-acetylglucosamine O-acyltransferase from Aquifex aeolicus (strain VF5).